Here is a 356-residue protein sequence, read N- to C-terminus: Tyrosine recombinase XerS (356 aa).

The Core-binding (CB) domain occupies 16-121 (IMPWYVLDYY…ALSSLYKYLT (106 aa)). The Tyr recombinase domain occupies 169 to 354 (AFLDYVDKEY…VNDEQKNALD (186 aa)). Catalysis depends on residues Arg-210, Lys-234, His-306, Arg-309, and His-332. Residue Tyr-341 is the O-(3'-phospho-DNA)-tyrosine intermediate of the active site.

It belongs to the 'phage' integrase family. XerS subfamily.

It localises to the cytoplasm. FtsK is required for recombination. In terms of biological role, site-specific tyrosine recombinase, which acts by catalyzing the cutting and rejoining of the recombining DNA molecules. Essential to convert dimers of the bacterial chromosome into monomers to permit their segregation at cell division. This chain is Tyrosine recombinase XerS, found in Streptococcus equi subsp. equi (strain 4047).